The following is a 267-amino-acid chain: MSHYPASGTWQACPKCGRHVHQRQWGTYQQCPYCHYWQRLTTAQRLEQLVDEGSFQPLTMTERPVNQLGFPDYTNKLRRAQRQTGLNEAVVCGTALIEQQPCILAVMDSHFMMGTLNTAVTRRLLHASEQARAQRLPLIIVTASGGARMQEGVYALVGMNLILAELARLAATPLPLITVLTDPTMGGVSASFAFKGDLIIAEAGAKIGFAGARVIQQTLPVKLPADFQTADQLFKNGMVDAVVERPQLRSTLGQALANYGIGRSAHG.

The CoA carboxyltransferase N-terminal domain maps to 9-267 (TWQACPKCGR…NYGIGRSAHG (259 aa)). Positions 13, 16, 31, and 34 each coordinate Zn(2+). A C4-type zinc finger spans residues 13–34 (CPKCGRHVHQRQWGTYQQCPYC).

Belongs to the AccD/PCCB family. As to quaternary structure, acetyl-CoA carboxylase is a heterohexamer composed of biotin carboxyl carrier protein (AccB), biotin carboxylase (AccC) and two subunits each of ACCase subunit alpha (AccA) and ACCase subunit beta (AccD). Zn(2+) is required as a cofactor.

It localises to the cytoplasm. The catalysed reaction is N(6)-carboxybiotinyl-L-lysyl-[protein] + acetyl-CoA = N(6)-biotinyl-L-lysyl-[protein] + malonyl-CoA. Its pathway is lipid metabolism; malonyl-CoA biosynthesis; malonyl-CoA from acetyl-CoA: step 1/1. Functionally, component of the acetyl coenzyme A carboxylase (ACC) complex. Biotin carboxylase (BC) catalyzes the carboxylation of biotin on its carrier protein (BCCP) and then the CO(2) group is transferred by the transcarboxylase to acetyl-CoA to form malonyl-CoA. The polypeptide is Acetyl-coenzyme A carboxylase carboxyl transferase subunit beta 1 (Lactiplantibacillus plantarum (strain JDM1) (Lactobacillus plantarum)).